Reading from the N-terminus, the 3423-residue chain is Genome polyprotein (3423 aa).

Residues M1–S25 form a disordered region. Residues M1–R104 are Cytoplasmic-facing. A hydrophobic; homodimerization of capsid protein C region spans residues L37–V72. Positions G105 to A122 are cleaved as a propeptide — ER anchor for capsid protein C, removed in mature form by serine protease NS3. The chain crosses the membrane as a helical span at residues G105–V125. Topologically, residues T126–N249 are extracellular. Residue N192 is glycosylated (N-linked (GlcNAc...) asparagine; by host). The chain crosses the membrane as a helical span at residues W250–G269. Over S270 to Q274 the chain is Cytoplasmic. A helical membrane pass occupies residues K275–S290. Residues I291–S745 lie on the Extracellular side of the membrane. A Glycyl lysine isopeptide (Lys-Gly) (interchain with G-Cter in ubiquitin) cross-link involves residue K328. 2 cysteine pairs are disulfide-bonded: C350-C406 and C382-C411. The segment at D388–G401 is fusion peptide. The N-linked (GlcNAc...) asparagine; by host glycan is linked to N444. Disulfide bonds link C480/C581 and C598/C629. Residue K571 forms a Glycyl lysine isopeptide (Lys-Gly) (interchain with G-Cter in ubiquitin) linkage. Residues L746–L767 form a helical membrane-spanning segment. The Cytoplasmic segment spans residues N768–S773. Residues I774–A794 traverse the membrane as a helical segment. Residues D795–K1177 are Lumenal-facing. Cystine bridges form between C798-C809, C849-C937, C973-C1017, C1074-C1123, C1085-C1106, and C1107-C1110. Residues N924 and N1001 are each glycosylated (N-linked (GlcNAc...) asparagine; by host). Residues I1178 to S1198 form a helical membrane-spanning segment. The Cytoplasmic portion of the chain corresponds to D1199–V1220. Residues A1221–F1241 form a helical membrane-spanning segment. At R1242 to D1270 the chain is on the lumenal side. Residues L1271–P1291 traverse the membrane as a helical segment. At R1292 to N1295 the chain is on the cytoplasmic side. Residues I1296–W1316 form a helical membrane-spanning segment. Residues R1317–M1345 lie on the Lumenal side of the membrane. A helical membrane pass occupies residues A1346–L1366. At T1367 to S1373 the chain is on the cytoplasmic side. The helical transmembrane segment at W1374–A1394 threads the bilayer. Over K1395 to D1397 the chain is Lumenal. Residues I1398–G1418 form a helical membrane-spanning segment. The Cytoplasmic portion of the chain corresponds to K1419 to K1472. Residues I1425 to P1464 form an interacts with and activates NS3 protease region. The disordered stretch occupies residues G1429–D1451. Residues V1473–W1493 constitute an intramembrane region (helical). At Y1494–T2170 the chain is on the lumenal side. The Peptidase S7 domain occupies S1503–C1680. Active-site charge relay system; for serine protease NS3 activity residues include H1553, D1577, and S1637. Residues P1683–E1839 enclose the Helicase ATP-binding domain. The important for RNA-binding stretch occupies residues K1687–Q1690. An ATP-binding site is contributed by L1696–T1703. Residues D1787–H1790 carry the DEAH box motif. In terms of domain architecture, Helicase C-terminal spans P1834–E2013. K1891 carries the N6-acetyllysine; by host modification. The chain crosses the membrane as a helical span at residues L2171 to L2191. Residues M2192–K2195 are Lumenal-facing. The helical intramembrane region spans G2196–L2216. Residues S2217 to E2218 are Cytoplasmic-facing. Residues I2219 to I2239 traverse the membrane as a helical segment. The Lumenal segment spans residues P2240–A2254. Residues I2255–A2269 constitute an intramembrane region (helical). The Lumenal segment spans residues N2270–S2307. The helical intramembrane region spans A2308–T2328. Topologically, residues T2329 to G2344 are lumenal. Residues V2345–L2365 traverse the membrane as a helical segment. The Cytoplasmic portion of the chain corresponds to M2366–P2375. The helical transmembrane segment at L2376 to L2396 threads the bilayer. Residues Q2397–Q2441 are Lumenal-facing. Residues V2442–G2462 form a helical membrane-spanning segment. Over E2463–L3423 the chain is Cytoplasmic. Residues G2521–A2785 form the mRNA cap 0-1 NS5-type MT domain. K2533–M2539 contributes to the GTP binding site. S2576 serves as a coordination point for S-adenosyl-L-methionine. S2576 carries the phosphoserine modification. Residue K2581 is the For 2'-O-MTase activity of the active site. The tract at residues V2597–L2600 is SUMO-interacting motif (SIM). Positions 2606, 2607, 2624, 2625, 2630, 2631, 2651, 2652, 2666, and 2667 each coordinate S-adenosyl-L-methionine. D2666 serves as the catalytic For 2'-O-MTase activity. GTP is bound at residue E2669–E2675. K2702 (for 2'-O-MTase activity) is an active-site residue. R2733–S2735 contacts GTP. E2738 functions as the For 2'-O-MTase activity in the catalytic mechanism. Residue Y2740 coordinates S-adenosyl-L-methionine. The short motif at K2908–V2914 is the Nuclear localization signal (NLS) element. The Zn(2+) site is built by E2959, H2963, C2968, and C2971. The RdRp catalytic domain maps to G3049–A3199. Zn(2+)-binding residues include H3234, C3250, and C3369.

In the N-terminal section; belongs to the class I-like SAM-binding methyltransferase superfamily. mRNA cap 0-1 NS5-type methyltransferase family. As to quaternary structure, homodimer. Interacts with host SERTAD3; this interaction promotes capsid protein C degradation. Interacts with host CAPRIN1; this interaction is probably linked to the inhibition of stress granules formation by the virus. Interacts with host G3BP1; this interaction is probably linked to the inhibition of stress granules formation by the virus. In terms of assembly, forms heterodimers with envelope protein E in the endoplasmic reticulum and Golgi. Interacts with non-structural protein 2A. Homodimer; in the endoplasmic reticulum and Golgi. Interacts with host TYRO3, AXL and DC-SIGN proteins. Interacts with non-structural protein 2A. Interacts with host HAVCR1; this interaction likely mediates virus attachment to host cell. Interacts with host NCAM1. Interacts with host HSPA5. Interacts with Aedes aegypti SRPN25, APY and venom allergen-1 salivary proteins; the interactions do not affect Zika virus replication in human endothelial cells and keratinocytes. As to quaternary structure, homodimer; Homohexamer when secreted. Interacts with host TBK1. Interacts with host USP8. Interacts with envelope protein E. In terms of assembly, interacts with the structural protein prM/E complex, and the NS2B/NS3 protease complex. Forms a heterodimer with serine protease NS3. May form homooligomers. Interacts with human SPCS1. Interacts with non-structural protein 2A. As to quaternary structure, forms a heterodimer with NS2B. Interacts with NS4B. Interacts with unphosphorylated RNA-directed RNA polymerase NS5; this interaction stimulates RNA-directed RNA polymerase NS5 guanylyltransferase activity. Interacts with non-structural protein 2A. Interacts with host SHFL; this interaction promotes NS3 degradation via a lysosome-dependent pathway. Interacts with host CEP63; this interaction disorganizes the centrosome and inhibits host innate immune response. In terms of assembly, may interact with host ANKLE2; the interaction may cause defects in brain development, such as microcephaly. May interact with host SRPRA and SEC61G. Interacts with serine protease NS3. Interacts with NS1. As to quaternary structure, homodimer. Interacts with host STAT2; this interaction inhibits the phosphorylation of the latter, and, when all viral proteins are present (polyprotein), targets STAT2 for degradation. Interacts with host TBK1 and IKBKE; these interactions lead to the inhibition of the host RIG-I signaling pathway. Interacts with host PAF1 complex; the interaction may prevent the recruitment of the host PAF1 complex to interferon-responsive genes, and thus reduces the immune response. Interacts with serine protease NS3. Interacts with host KPNA2. Interacts with host ZSWIM8; this interaction allows STAT2 binding to ZSWIM8 and subsequent proteasomal degradation leading to inhibition of interferon signaling. Specific enzymatic cleavages in vivo yield mature proteins. Cleavages in the lumen of endoplasmic reticulum are performed by host signal peptidase, whereas cleavages in the cytoplasmic side are performed by serine protease NS3. Signal cleavage at the 2K-4B site requires a prior NS3 protease-mediated cleavage at the 4A-2K site. Post-translationally, cleaved in post-Golgi vesicles by a host furin, releasing the mature small envelope protein M, and peptide pr. This cleavage is incomplete as up to 30% of viral particles still carry uncleaved prM. In terms of processing, N-glycosylation plays a role in virulence in mammalian and mosquito hosts, but may have no effect on neurovirulence. Ubiquitination by host TRIM7 promotes virus attachment and fusion of the virus and the host endosome membrane. Post-translationally, N-glycosylated. The excreted form is glycosylated, which is required for efficient secretion of the protein from infected cells. In terms of processing, ubiquitination by host TRIM22 leads to proteasomal degradation. Acetylated by host KAT5. Acetylation modulates NS3 RNA-binding and unwinding activities and plays an important positive role for viral replication. Post-translationally, phosphorylated on serines residues. This phosphorylation may trigger NS5 nuclear localization. In terms of processing, sumoylated, required for regulating IFN induced interferon stimulated genes/ISGs.

It is found in the virion. The protein resides in the host nucleus. Its subcellular location is the host cytoplasm. The protein localises to the host perinuclear region. It localises to the secreted. It is found in the virion membrane. The protein resides in the host endoplasmic reticulum membrane. Its subcellular location is the host cell surface. It catalyses the reaction a 5'-end (5'-triphosphoguanosine)-ribonucleoside in mRNA + S-adenosyl-L-methionine = a 5'-end (N(7)-methyl 5'-triphosphoguanosine)-ribonucleoside in mRNA + S-adenosyl-L-homocysteine. It carries out the reaction a 5'-end (N(7)-methyl 5'-triphosphoguanosine)-ribonucleoside in mRNA + S-adenosyl-L-methionine = a 5'-end (N(7)-methyl 5'-triphosphoguanosine)-(2'-O-methyl-ribonucleoside) in mRNA + S-adenosyl-L-homocysteine + H(+). The enzyme catalyses RNA(n) + a ribonucleoside 5'-triphosphate = RNA(n+1) + diphosphate. The catalysed reaction is Selective hydrolysis of -Xaa-Xaa-|-Yaa- bonds in which each of the Xaa can be either Arg or Lys and Yaa can be either Ser or Ala.. It catalyses the reaction a ribonucleoside 5'-triphosphate + H2O = a ribonucleoside 5'-diphosphate + phosphate + H(+). It carries out the reaction ATP + H2O = ADP + phosphate + H(+). Functionally, plays a role in virus budding by binding to the cell membrane and gathering the viral RNA into a nucleocapsid that forms the core of the mature virus particle. During virus entry, may induce genome penetration into the host cytoplasm after hemifusion induced by the surface proteins. Can migrate to the cell nucleus where it modulates host functions. Inhibits the integrated stress response (ISR) in the infected cell. Its function is as follows. Inhibits RNA silencing by interfering with host Dicer. Prevents premature fusion activity of envelope proteins in trans-Golgi by binding to envelope protein E at pH 6.0. After virion release in extracellular space, gets dissociated from E dimers. In terms of biological role, plays a role in host immune defense modulation and protection of envelope protein E during virion synthesis. PrM-E cleavage is inefficient, many virions are only partially matured and immature prM-E proteins could play a role in immune evasion. Contributes to fetal microcephaly in humans. Acts as a chaperone for envelope protein E during intracellular virion assembly by masking and inactivating envelope protein E fusion peptide. prM is the only viral peptide matured by host furin in the trans-Golgi network probably to avoid catastrophic activation of the viral fusion activity in acidic Golgi compartment prior to virion release. Functionally, may play a role in virus budding. Exerts cytotoxic effects by activating a mitochondrial apoptotic pathway through M ectodomain. May display a viroporin activity. Its function is as follows. Binds to host cell surface receptors and mediates fusion between viral and cellular membranes. Efficient virus attachment to cell is, at least in part, mediated by host HAVCR1 in a cell-type specific manner. In addition, host NCAM1 can also be used as entry receptor. Interaction with host HSPA5 plays an important role in the early stages of infection as well. Envelope protein is synthesized in the endoplasmic reticulum and forms a heterodimer with protein prM. The heterodimer plays a role in virion budding in the ER, and the newly formed immature particle is covered with 60 spikes composed of heterodimers between precursor prM and envelope protein E. The virion is transported to the Golgi apparatus where the low pH causes the dissociation of PrM-E heterodimers and formation of E homodimers. PrM-E cleavage is inefficient, many virions are only partially matured and immature prM-E proteins could play a role in immune evasion. Plays a role in the inhibition of host RLR-induced interferon-beta activation by targeting TANK-binding kinase 1/TBK1. In addition, recruits the host deubiquitinase USP8 to cleave 'Lys-11'-linked polyubiquitin chains from caspase-1/CASP1 thus inhibiting its proteasomal degradation. In turn, stabilized CASP1 promotes cleavage of cGAS, which inhibits its ability to recognize mitochondrial DNA release and initiate type I interferon signaling. In terms of biological role, component of the viral RNA replication complex that recruits genomic RNA, the structural protein prM/E complex, and the NS2B/NS3 protease complex to the virion assembly site and orchestrates virus morphogenesis. Also antagonizes the host alpha/beta interferon antiviral response. May disrupt adherens junction formation and thereby impair proliferation of radial cells in the host cortex. Functionally, required cofactor for the serine protease function of NS3. Its function is as follows. Displays three enzymatic activities: serine protease, NTPase and RNA helicase. NS3 serine protease, in association with NS2B, performs its autocleavage and cleaves the polyprotein at dibasic sites in the cytoplasm: C-prM, NS2A-NS2B, NS2B-NS3, NS3-NS4A, NS4A-2K and NS4B-NS5. NS3 RNA helicase binds RNA and unwinds dsRNA in the 3' to 5' direction. Leads to translation arrest when expressed ex vivo. Disrupts host centrosome organization in a CEP63-dependent manner to degrade host TBK1 and inhibits innate immune response. Inhibits the integrated stress response (ISR) in the infected cell. Regulates the ATPase activity of the NS3 helicase activity. NS4A allows NS3 helicase to conserve energy during unwinding. Cooperatively with NS4B suppresses the Akt-mTOR pathway and leads to cellular dysregulation. By inhibiting host ANKLE2 functions, may cause defects in brain development, such as microcephaly. Also antagonizes the host MDA5-mediated induction of alpha/beta interferon antiviral response. Leads to translation arrest when expressed ex vivo. Inhibits the integrated stress response (ISR) in the infected cell. In terms of biological role, functions as a signal peptide for NS4B and is required for the interferon antagonism activity of the latter. Functionally, induces the formation of ER-derived membrane vesicles where the viral replication takes place. Also plays a role in the inhibition of host RLR-induced interferon-beta production at TANK-binding kinase 1/TBK1 level. Cooperatively with NS4A suppresses the Akt-mTOR pathway and leads to cellular dysregulation. Its function is as follows. Replicates the viral (+) and (-) RNA genome, and performs the capping of genomes in the cytoplasm. Methylates viral RNA cap at guanine N-7 and ribose 2'-O positions. Once sufficient NS5 is expressed, binds to the cap-proximal structure and inhibits further translation of the viral genome. Besides its role in RNA genome replication, also prevents the establishment of a cellular antiviral state by blocking the interferon-alpha/beta (IFN-alpha/beta) signaling pathway. Mechanistically, interferes with host kinases TBK1 and IKKE upstream of interferon regulatory factor 3/IRF3 to inhibit the RIG-I pathway. Also antagonizes type I interferon signaling by targeting STAT2 for degradation by the proteasome thereby preventing activation of JAK-STAT signaling pathway. Mechanistically, acts as a scaffold protein to connect host ZSWIM8/CUL3 ligase complex and STAT2, leading to STAT2 degradation. Within the host nucleus, disrupts host SUMO1 and STAT2 co-localization with PML, resulting in PML degradation. May also reduce immune responses by preventing the recruitment of the host PAF1 complex to interferon-responsive genes. In Zika virus (isolate ZIKV/Human/Cambodia/FSS13025/2010) (ZIKV), this protein is Genome polyprotein.